We begin with the raw amino-acid sequence, 496 residues long: Probable E3 ubiquitin-protein ligase ARI12 (496 aa).

The segment at 110–319 (NEYFCGACGE…GDLHFCTFDA (210 aa)) is TRIAD supradomain. Zn(2+) is bound by residues Cys-114, Cys-117, Cys-131, His-133, Cys-136, Cys-139, Cys-162, Cys-172, Cys-240, Cys-243, His-248, Cys-253, Cys-267, Cys-270, Cys-286, and Cys-289. The RING-type 1 zinc finger occupies 114–172 (CGACGESHPHKNLASVSCGHRICTRCWTSHINKIISEKPAAEWNLWLKCPVRVGLHASC). An IBR-type zinc finger spans residues 191 to 253 (FNYNQYLLRS…REDAHSPVDC (63 aa)). The segment at 267-297 (CPKCKLRIPRNQDNSLKMKCLPCNYVFCWFC) adopts an RING-type 2; atypical zinc-finger fold.

It belongs to the RBR family. Ariadne subfamily. Zn(2+) is required as a cofactor. In terms of tissue distribution, preferentially expressed in roots.

It carries out the reaction [E2 ubiquitin-conjugating enzyme]-S-ubiquitinyl-L-cysteine + [acceptor protein]-L-lysine = [E2 ubiquitin-conjugating enzyme]-L-cysteine + [acceptor protein]-N(6)-ubiquitinyl-L-lysine.. It functions in the pathway protein modification; protein ubiquitination. In terms of biological role, might act as an E3 ubiquitin-protein ligase, or as part of E3 complex, which accepts ubiquitin from specific E2 ubiquitin-conjugating enzymes and then transfers it to substrates. This Arabidopsis thaliana (Mouse-ear cress) protein is Probable E3 ubiquitin-protein ligase ARI12 (ARI12).